We begin with the raw amino-acid sequence, 252 residues long: Major prion protein (252 aa).

Residues 1–28 (MAHLGYWMLLLFVATWSDVGLCKKRPKP) form the signal peptide. Positions 23 to 229 (KKRPKPGGGW…ESQAAYQRAA (207 aa)) are interaction with GRB2, ERI3 and SYN1. The interval 26–109 (PKPGGGWNTG…KPSKPKTSMK (84 aa)) is disordered. 5 consecutive repeat copies span residues 51–59 (PPQGGGWGQ), 60–67 (PHGGGWGQ), 68–75 (PHGGGWGQ), 76–83 (PHGGGWGQ), and 84–92 (PHGGGWGQG). Residues 51 to 92 (PPQGGGWGQPHGGGWGQPHGGGWGQPHGGGWGQPHGGGWGQG) are 5 X 8 AA tandem repeats of P-H-G-G-G-W-G-Q. Over residues 53–93 (QGGGWGQPHGGGWGQPHGGGWGQPHGGGWGQPHGGGWGQGG) the composition is skewed to gly residues. Cu(2+) is bound by residues histidine 61, glycine 62, glycine 63, histidine 69, glycine 70, glycine 71, histidine 77, glycine 78, glycine 79, histidine 85, glycine 86, and glycine 87. Residues cysteine 178 and cysteine 213 are joined by a disulfide bond. Residues asparagine 180 and asparagine 196 are each glycosylated (N-linked (GlcNAc...) asparagine). Alanine 229 carries GPI-anchor amidated alanine lipidation. Residues 230 to 252 (GVLLFSSPPVILLISFLIFLIVG) constitute a propeptide, removed in mature form.

The protein belongs to the prion family. As to quaternary structure, monomer and homodimer. Has a tendency to aggregate into amyloid fibrils containing a cross-beta spine, formed by a steric zipper of superposed beta-strands. Soluble oligomers may represent an intermediate stage on the path to fibril formation. Copper binding may promote oligomerization. Interacts with GRB2, APP, ERI3/PRNPIP and SYN1. Mislocalized cytosolically exposed PrP interacts with MGRN1; this interaction alters MGRN1 subcellular location and causes lysosomal enlargement. Interacts with KIAA1191.

It is found in the cell membrane. Its subcellular location is the golgi apparatus. In terms of biological role, its primary physiological function is unclear. Has cytoprotective activity against internal or environmental stresses. May play a role in neuronal development and synaptic plasticity. May be required for neuronal myelin sheath maintenance. May play a role in iron uptake and iron homeostasis. Soluble oligomers are toxic to cultured neuroblastoma cells and induce apoptosis (in vitro). Association with GPC1 (via its heparan sulfate chains) targets PRNP to lipid rafts. Also provides Cu(2+) or Zn(2+) for the ascorbate-mediated GPC1 deaminase degradation of its heparan sulfate side chains. The protein is Major prion protein (PRNP) of Oryctolagus cuniculus (Rabbit).